The chain runs to 157 residues: Beta-defensin 125 (157 aa).

The signal sequence occupies residues 1–20 (MNILMLTFIICGLLTQVTKG). Cystine bridges form between cysteine 27-cysteine 55, cysteine 35-cysteine 49, and cysteine 39-cysteine 56. Positions 109 to 157 (GETMTPETNTPETTMPPPETTTPETTMPPSETATSETMPPPSQRALTHN) are disordered. Composition is skewed to low complexity over residues 110–121 (ETMTPETNTPET) and 129–145 (TTPETTMPPSETATSET).

This sequence belongs to the beta-defensin family.

The protein localises to the secreted. In terms of biological role, has antibacterial activity. This Pan troglodytes (Chimpanzee) protein is Beta-defensin 125 (DEFB125).